The primary structure comprises 219 residues: Segregation and condensation protein B (219 aa).

Positions 193–219 are disordered; that stretch reads SLFAGGEEPSAEAADGGAGESTHGEEE. A compositionally biased stretch (low complexity) spans 196 to 207; that stretch reads AGGEEPSAEAAD.

Belongs to the ScpB family. In terms of assembly, homodimer. Homodimerization may be required to stabilize the binding of ScpA to the Smc head domains. Component of a cohesin-like complex composed of ScpA, ScpB and the Smc homodimer, in which ScpA and ScpB bind to the head domain of Smc. The presence of the three proteins is required for the association of the complex with DNA.

The protein localises to the cytoplasm. Functionally, participates in chromosomal partition during cell division. May act via the formation of a condensin-like complex containing Smc and ScpA that pull DNA away from mid-cell into both cell halves. This chain is Segregation and condensation protein B, found in Symbiobacterium thermophilum (strain DSM 24528 / JCM 14929 / IAM 14863 / T).